The chain runs to 64 residues: Orcokinin peptides (64 aa).

Propeptides lie at residues 1-6 (MNIRPG) and 23-24 (NI).

The protein belongs to the orcokinin family. As to expression, orcokinin-3 is expressed throughout the central nervous system (at protein level).

Its subcellular location is the secreted. In terms of biological role, myotropic peptides. The protein is Orcokinin peptides of Camponotus floridanus (Florida carpenter ant).